The following is a 433-amino-acid chain: Enolase (433 aa).

Glutamine 163 provides a ligand contact to (2R)-2-phosphoglycerate. Glutamate 205 serves as the catalytic Proton donor. Mg(2+) is bound by residues aspartate 242, glutamate 291, and aspartate 318. (2R)-2-phosphoglycerate is bound by residues lysine 343, arginine 372, serine 373, and lysine 394. Lysine 343 serves as the catalytic Proton acceptor.

This sequence belongs to the enolase family. The cofactor is Mg(2+).

It localises to the cytoplasm. The protein localises to the secreted. It is found in the cell surface. The enzyme catalyses (2R)-2-phosphoglycerate = phosphoenolpyruvate + H2O. The protein operates within carbohydrate degradation; glycolysis; pyruvate from D-glyceraldehyde 3-phosphate: step 4/5. Functionally, catalyzes the reversible conversion of 2-phosphoglycerate (2-PG) into phosphoenolpyruvate (PEP). It is essential for the degradation of carbohydrates via glycolysis. This Methylibium petroleiphilum (strain ATCC BAA-1232 / LMG 22953 / PM1) protein is Enolase.